A 224-amino-acid polypeptide reads, in one-letter code: Non-structural protein 3 (224 aa).

The region spanning 34-124 is the CoV 3a-like viroporin TM domain; it reads NVVPIRQASN…RYKNALFIIF (91 aa). The next 3 membrane-spanning stretches (helical) occupy residues 40-60, 69-88, and 95-111; these read QASNVTGFLFTSVFVYFFALF, YIMLAARFAVVFLYCPLLYY, and ATIICCALIGRLCLVCF. The CoV 3a-like viroporin CD domain maps to 128–203; sequence TLSFLNGKAA…KLYVFSQHQI (76 aa).

The protein resides in the host membrane. The sequence is that of Non-structural protein 3 from Sus scrofa (Pig).